A 405-amino-acid polypeptide reads, in one-letter code: Probable tRNA sulfurtransferase (405 aa).

The 106-residue stretch at 60–165 folds into the THUMP domain; sequence DKVMGRLKLV…LNGIFLSSET (106 aa). Residues 183-184, 208-209, Arg-265, Gly-287, and Gln-296 contribute to the ATP site; these read ML and HF.

Belongs to the ThiI family.

The protein resides in the cytoplasm. It carries out the reaction [ThiI sulfur-carrier protein]-S-sulfanyl-L-cysteine + a uridine in tRNA + 2 reduced [2Fe-2S]-[ferredoxin] + ATP + H(+) = [ThiI sulfur-carrier protein]-L-cysteine + a 4-thiouridine in tRNA + 2 oxidized [2Fe-2S]-[ferredoxin] + AMP + diphosphate. The enzyme catalyses [ThiS sulfur-carrier protein]-C-terminal Gly-Gly-AMP + S-sulfanyl-L-cysteinyl-[cysteine desulfurase] + AH2 = [ThiS sulfur-carrier protein]-C-terminal-Gly-aminoethanethioate + L-cysteinyl-[cysteine desulfurase] + A + AMP + 2 H(+). The protein operates within cofactor biosynthesis; thiamine diphosphate biosynthesis. Catalyzes the ATP-dependent transfer of a sulfur to tRNA to produce 4-thiouridine in position 8 of tRNAs, which functions as a near-UV photosensor. Also catalyzes the transfer of sulfur to the sulfur carrier protein ThiS, forming ThiS-thiocarboxylate. This is a step in the synthesis of thiazole, in the thiamine biosynthesis pathway. The sulfur is donated as persulfide by IscS. The protein is Probable tRNA sulfurtransferase of Lactiplantibacillus plantarum (strain ATCC BAA-793 / NCIMB 8826 / WCFS1) (Lactobacillus plantarum).